A 130-amino-acid polypeptide reads, in one-letter code: uncharacterized protein (130 aa).

The tract at residues 1-104 (MRPGSSPRAP…RGRWGLRGGP (104 aa)) is disordered. Residues 88–97 (RRQPGPQRGR) are compositionally biased toward low complexity.

This is an uncharacterized protein from Homo sapiens (Human).